A 198-amino-acid polypeptide reads, in one-letter code: Glycerol-3-phosphate acyltransferase (198 aa).

Helical transmembrane passes span 2–22, 48–70, 75–97, 111–131, and 154–174; these read YAVLTAIIAYLIGCINNAYIF, LGYKAAAPVFALDVLKGVIAVLI, MGNTGAMIAGIAVVCGHNWPVFL, VVMTVSPLLGLIALAIGVTVI, and IFWNSTQIFIFSLILASLAIF.

It belongs to the PlsY family. As to quaternary structure, probably interacts with PlsX.

It is found in the cell membrane. The catalysed reaction is an acyl phosphate + sn-glycerol 3-phosphate = a 1-acyl-sn-glycero-3-phosphate + phosphate. Its pathway is lipid metabolism; phospholipid metabolism. In terms of biological role, catalyzes the transfer of an acyl group from acyl-phosphate (acyl-PO(4)) to glycerol-3-phosphate (G3P) to form lysophosphatidic acid (LPA). This enzyme utilizes acyl-phosphate as fatty acyl donor, but not acyl-CoA or acyl-ACP. This chain is Glycerol-3-phosphate acyltransferase, found in Thermoanaerobacter sp. (strain X514).